A 434-amino-acid chain; its full sequence is Nicotinate phosphoribosyltransferase (434 aa).

A Phosphohistidine; by autocatalysis modification is found at H242.

This sequence belongs to the NAPRTase family. Transiently phosphorylated on a His residue during the reaction cycle. Phosphorylation strongly increases the affinity for substrates and increases the rate of nicotinate D-ribonucleotide production. Dephosphorylation regenerates the low-affinity form of the enzyme, leading to product release.

The enzyme catalyses nicotinate + 5-phospho-alpha-D-ribose 1-diphosphate + ATP + H2O = nicotinate beta-D-ribonucleotide + ADP + phosphate + diphosphate. Its pathway is cofactor biosynthesis; NAD(+) biosynthesis; nicotinate D-ribonucleotide from nicotinate: step 1/1. Functionally, catalyzes the synthesis of beta-nicotinate D-ribonucleotide from nicotinate and 5-phospho-D-ribose 1-phosphate at the expense of ATP. The sequence is that of Nicotinate phosphoribosyltransferase from Sinorhizobium fredii (strain NBRC 101917 / NGR234).